The primary structure comprises 273 residues: Undecaprenyl-diphosphatase (273 aa).

Helical transmembrane passes span 3–23, 47–67, 90–110, 120–140, 148–168, 186–206, 217–237, and 249–269; these read IILWLQAVILGLVQGMTEFLP, ALDAMQFGSVIAVLGYFWQDI, LLLGITVGTIPALAAGLLLKL, IIATMAIAMAILLGLAEQWGS, IGILDGFLVGCGQMIALLPGA, PTAARFSFLLGIPTLTIATLV, LLIPLVIATLSSMVFSYLAIA, and WVFIWYRIGLGSALWGAIALG.

The protein belongs to the UppP family.

The protein resides in the cell inner membrane. The catalysed reaction is di-trans,octa-cis-undecaprenyl diphosphate + H2O = di-trans,octa-cis-undecaprenyl phosphate + phosphate + H(+). Catalyzes the dephosphorylation of undecaprenyl diphosphate (UPP). Confers resistance to bacitracin. The sequence is that of Undecaprenyl-diphosphatase from Thermosynechococcus vestitus (strain NIES-2133 / IAM M-273 / BP-1).